We begin with the raw amino-acid sequence, 379 residues long: Anhydro-N-acetylmuramic acid kinase (379 aa).

9-16 (GTSADGVD) is a binding site for ATP.

The protein belongs to the anhydro-N-acetylmuramic acid kinase family.

The catalysed reaction is 1,6-anhydro-N-acetyl-beta-muramate + ATP + H2O = N-acetyl-D-muramate 6-phosphate + ADP + H(+). It participates in amino-sugar metabolism; 1,6-anhydro-N-acetylmuramate degradation. The protein operates within cell wall biogenesis; peptidoglycan recycling. Catalyzes the specific phosphorylation of 1,6-anhydro-N-acetylmuramic acid (anhMurNAc) with the simultaneous cleavage of the 1,6-anhydro ring, generating MurNAc-6-P. Is required for the utilization of anhMurNAc either imported from the medium or derived from its own cell wall murein, and thus plays a role in cell wall recycling. This Parasynechococcus marenigrum (strain WH8102) protein is Anhydro-N-acetylmuramic acid kinase.